Reading from the N-terminus, the 319-residue chain is Aspartate carbamoyltransferase catalytic subunit (319 aa).

Residues Arg64 and Thr65 each coordinate carbamoyl phosphate. Lys92 contacts L-aspartate. Positions 114, 142, and 145 each coordinate carbamoyl phosphate. 2 residues coordinate L-aspartate: Arg175 and Arg229. Positions 270 and 271 each coordinate carbamoyl phosphate.

Belongs to the aspartate/ornithine carbamoyltransferase superfamily. ATCase family. As to quaternary structure, heterododecamer (2C3:3R2) of six catalytic PyrB chains organized as two trimers (C3), and six regulatory PyrI chains organized as three dimers (R2).

The catalysed reaction is carbamoyl phosphate + L-aspartate = N-carbamoyl-L-aspartate + phosphate + H(+). Its pathway is pyrimidine metabolism; UMP biosynthesis via de novo pathway; (S)-dihydroorotate from bicarbonate: step 2/3. In terms of biological role, catalyzes the condensation of carbamoyl phosphate and aspartate to form carbamoyl aspartate and inorganic phosphate, the committed step in the de novo pyrimidine nucleotide biosynthesis pathway. The protein is Aspartate carbamoyltransferase catalytic subunit of Rhodospirillum rubrum (strain ATCC 11170 / ATH 1.1.1 / DSM 467 / LMG 4362 / NCIMB 8255 / S1).